A 679-amino-acid polypeptide reads, in one-letter code: MWPRLPGAGLAPQLRRQDQRLHFTGQMSHGLQMAGPQETVLALPLREGVQAAATVPILLYNLEDGLSDHPLDQGPRCPARRPCSPASAPAPTSPKKPKIQAPGETFPTDWSPPPVEFLNPRVLQASREAPAQRWVGVVGPQGLRRLAGELPEELEQEHLDLDPKRGLALPEKLFWNTSGLSQQAAAPEFSWGGSGSYFNNLDYLLQEKREQALEQERERLLLQECLNLNSLDLDEEEVPLTPEHRMLVEKYSVSLQTIPPVHPGETVFLPRCHPLPCILDSSLLKPRSHLEGLFLSSPPAQQLSFLRSGLLNILYLHMPDCPVSLLQWLFQLLTWPPETSLGAFGLLWDLIVDGIFLQPDEDKHLWCPSLQEVREAFHSLGAHSPALYPLGPFWHGGRVLPGEAGLNENEEQDAPQEIALDISLGHIYKFLALCAQAQPGAYTDENLMGLIELLCRTSLDVGLRLLPKVDLQQLLLLLLENIREWPGKLQELCCTLSWVSDHHHNLLALVQFFPDMTSRSRRLRSQLSLVVIARMLGQQEMLPLWQEKTQLSSLSRLLGLMRPSSLRQYLDSVPLPPCQEQQPKASAELDHKACYLCHSLLMLAGVVVSCQDITPDQWGELQLLCMQLDRHISTQIRESPQAMHRTMLKDLATQTYIRWQELLTHCQPQAQYFSPWKDI.

The disordered stretch occupies residues 70–113; sequence PLDQGPRCPARRPCSPASAPAPTSPKKPKIQAPGETFPTDWSPP. The segment covering 75-90 has biased composition (low complexity); that stretch reads PRCPARRPCSPASAPA.

It belongs to the FAM178 family.

The chain is Protein FAM178B from Homo sapiens (Human).